The primary structure comprises 240 residues: Uridylate kinase (240 aa).

12–15 (KLSG) serves as a coordination point for ATP. The involved in allosteric activation by GTP stretch occupies residues 20–25 (GKQGFG). Gly54 provides a ligand contact to UMP. Positions 55 and 59 each coordinate ATP. UMP contacts are provided by residues Asp74 and 135–142 (TGNPYFST). 3 residues coordinate ATP: Asn163, Tyr169, and Asp172.

This sequence belongs to the UMP kinase family. As to quaternary structure, homohexamer.

It localises to the cytoplasm. The catalysed reaction is UMP + ATP = UDP + ADP. Its pathway is pyrimidine metabolism; CTP biosynthesis via de novo pathway; UDP from UMP (UMPK route): step 1/1. Its activity is regulated as follows. Allosterically activated by GTP. Inhibited by UTP. Functionally, catalyzes the reversible phosphorylation of UMP to UDP. In Geobacillus kaustophilus (strain HTA426), this protein is Uridylate kinase.